Here is a 49-residue protein sequence, read N- to C-terminus: Large ribosomal subunit protein bL33A (49 aa).

Belongs to the bacterial ribosomal protein bL33 family.

The polypeptide is Large ribosomal subunit protein bL33A (Leuconostoc mesenteroides subsp. mesenteroides (strain ATCC 8293 / DSM 20343 / BCRC 11652 / CCM 1803 / JCM 6124 / NCDO 523 / NBRC 100496 / NCIMB 8023 / NCTC 12954 / NRRL B-1118 / 37Y)).